A 500-amino-acid polypeptide reads, in one-letter code: Aspartyl/glutamyl-tRNA(Asn/Gln) amidotransferase subunit B (500 aa).

The protein belongs to the GatB/GatE family. GatB subfamily. Heterotrimer of A, B and C subunits.

It carries out the reaction L-glutamyl-tRNA(Gln) + L-glutamine + ATP + H2O = L-glutaminyl-tRNA(Gln) + L-glutamate + ADP + phosphate + H(+). The enzyme catalyses L-aspartyl-tRNA(Asn) + L-glutamine + ATP + H2O = L-asparaginyl-tRNA(Asn) + L-glutamate + ADP + phosphate + 2 H(+). Functionally, allows the formation of correctly charged Asn-tRNA(Asn) or Gln-tRNA(Gln) through the transamidation of misacylated Asp-tRNA(Asn) or Glu-tRNA(Gln) in organisms which lack either or both of asparaginyl-tRNA or glutaminyl-tRNA synthetases. The reaction takes place in the presence of glutamine and ATP through an activated phospho-Asp-tRNA(Asn) or phospho-Glu-tRNA(Gln). This Sinorhizobium medicae (strain WSM419) (Ensifer medicae) protein is Aspartyl/glutamyl-tRNA(Asn/Gln) amidotransferase subunit B.